Reading from the N-terminus, the 58-residue chain is KLHPLVMLNISDHLTKALMDINESPVYVLLNPTINHAQKKMLNSRIRVLHQYLGSMQK.

Belongs to the peptidase M67A family. CSN6 subfamily. In terms of assembly, component of the CSN complex, probably composed of CSN1, CSN2, CSN3, CSN4, CSN5 (CSN5A or CSN5B), CSN6 (CSN6A or CSN6B), CSN7 and CSN8.

The protein localises to the cytoplasm. It is found in the nucleus. Functionally, component of the COP9 signalosome complex (CSN), a complex involved in various cellular and developmental processes such as photomorphogenesis and auxin and jasmonate responses. The CSN complex is an essential regulator of the ubiquitin (Ubl) conjugation pathway by mediating the deneddylation of the cullin subunits of SCF-type E3 ligase complexes, leading to decrease the Ubl ligase activity of SCF. It is involved in repression of photomorphogenesis in darkness by regulating the activity of COP1-containing Ubl ligase complexes. The protein is COP9 signalosome complex subunit 6b (CSN6B) of Brassica oleracea (Wild cabbage).